A 396-amino-acid chain; its full sequence is Putative nickel insertion protein (396 aa).

The protein belongs to the LarC family.

The sequence is that of Putative nickel insertion protein from Wolinella succinogenes (strain ATCC 29543 / DSM 1740 / CCUG 13145 / JCM 31913 / LMG 7466 / NCTC 11488 / FDC 602W) (Vibrio succinogenes).